A 58-amino-acid chain; its full sequence is Small ribosomal subunit protein bS21 (58 aa).

Belongs to the bacterial ribosomal protein bS21 family.

This Prochlorococcus marinus (strain MIT 9301) protein is Small ribosomal subunit protein bS21.